The chain runs to 813 residues: Tax1-binding protein 1 homolog (813 aa).

A phosphoserine mark is found at Ser-124, Ser-138, and Ser-225. The stretch at 144 to 627 (TTKAGLLELK…LENQAERKME (484 aa)) forms a coiled coil. The segment at 320-420 (EEIGRLQLCL…ELKLNAMKKD (101 aa)) is oligomerization. Residues 489 to 502 (DASVNTDPATSAST) show a composition bias toward polar residues. The segment at 489–508 (DASVNTDPATSASTVDVKPS) is disordered. Phosphoserine is present on residues Ser-617, Ser-633, and Ser-690. Residues 663 to 738 (YASQETRDGA…DPPSQHLRGH (76 aa)) form a disordered region. UBZ1-type zinc fingers lie at residues 751-777 (HKKC…VESH) and 778-804 (WKVC…VQTH). Cys-754, Cys-757, His-773, His-777, Cys-781, Cys-784, His-800, and His-804 together coordinate Zn(2+).

In terms of assembly, homooligomer. Interacts with TNFAIP3. Interacts with STARD13. Interacts with MYO6. Interacts with TOM1; the interaction is indirect and is mediated by MYO6, which acts as a bridge between TOM1 and TAX1BP1. Interacts with MAVS; this interaction induces MAVS polyubiquitination. Interacts with TNIP1. Interacts with TRAF6; this interaction mediates deubiquitination of TRAF6 and inhibition of NF-kappa-B activation. Interacts with RIPK1; this interaction negatively regulates RIPK1 ubiquitination. Interacts with NBR1. Interacts with TBK1. Interacts with RB1CC1. Interacts with SQSTM1. Interacts with AZI2.

The protein resides in the cytoplasm. Its subcellular location is the mitochondrion. It localises to the preautophagosomal structure. It is found in the cytoplasmic vesicle. The protein localises to the autophagosome. Functionally, ubiquitin-binding adapter that participates in inflammatory, antiviral and innate immune processes as well as selective autophagy regulation. Plays a key role in the negative regulation of NF-kappa-B and IRF3 signalings by acting as an adapter for the ubiquitin-editing enzyme A20/TNFAIP3 to bind and inactivate its substrates. Disrupts the interactions between the E3 ubiquitin ligase TRAF3 and TBK1/IKBKE to attenuate 'Lys63'-linked polyubiquitination of TBK1 and thereby IFN-beta production. Also recruits A20/TNFAIP3 to ubiquitinated signaling proteins TRAF6 and RIPK1, leading to their deubiquitination and disruption of IL-1 and TNF-induced NF-kappa-B signaling pathways. Inhibits virus-induced apoptosis by inducing the 'Lys-48'-linked polyubiquitination and degradation of MAVS via recruitment of the E3 ligase ITCH, thereby attenuating MAVS-mediated apoptosis signaling. As a macroautophagy/autophagy receptor, facilitates the xenophagic clearance of pathogenic bacteria such as Salmonella typhimurium and Mycobacterium tuberculosis. Upon NBR1 recruitment to the SQSTM1-ubiquitin condensates, acts as the major recruiter of RB1CC1 to these ubiquitin condensates to promote their autophagic degradation. The polypeptide is Tax1-binding protein 1 homolog (TAX1BP1) (Pongo abelii (Sumatran orangutan)).